Here is a 477-residue protein sequence, read N- to C-terminus: TNF receptor-associated factor family protein DDB_G0278133 (477 aa).

Residues 45–88 form an RING-type; degenerate zinc finger; it reads CDICTLELFIESEPKALQCKEGHLACRRCWERYLSTNKQCMTCK. 2 TRAF-type zinc fingers span residues 160–211 and 212–267; these read NHYK…SSLS and DHHK…SKMQ. The stretch at 271-326 forms a coiled coil; the sequence is LEHSVTKLMNQNEIIKKDNQNLDQEKKIEEIKLKLNNLLNNYIQLKNEIAVLKQNS. The MATH domain occupies 331-463; that stretch reads VYSNKWIIPE…FLNEKGELEI (133 aa).

This sequence belongs to the TNF receptor-associated factor family. A subfamily.

It is found in the cytoplasm. Probable adapter protein and signal transducer that links members of the tumor necrosis factor receptor family to different signaling pathways by association with the receptor cytoplasmic domain and kinases. The protein is TNF receptor-associated factor family protein DDB_G0278133 of Dictyostelium discoideum (Social amoeba).